A 42-amino-acid polypeptide reads, in one-letter code: Photosystem II reaction center protein J (42 aa).

Residues 10–30 (IPLWLVGTVVGLLAIGLLALF) traverse the membrane as a helical segment.

It belongs to the PsbJ family. As to quaternary structure, PSII is composed of 1 copy each of membrane proteins PsbA, PsbB, PsbC, PsbD, PsbE, PsbF, PsbH, PsbI, PsbJ, PsbK, PsbL, PsbM, PsbT, PsbX, PsbY, PsbZ, Psb30/Ycf12, at least 3 peripheral proteins of the oxygen-evolving complex and a large number of cofactors. It forms dimeric complexes.

Its subcellular location is the plastid. The protein localises to the chloroplast thylakoid membrane. In terms of biological role, one of the components of the core complex of photosystem II (PSII). PSII is a light-driven water:plastoquinone oxidoreductase that uses light energy to abstract electrons from H(2)O, generating O(2) and a proton gradient subsequently used for ATP formation. It consists of a core antenna complex that captures photons, and an electron transfer chain that converts photonic excitation into a charge separation. This Mesostigma viride (Green alga) protein is Photosystem II reaction center protein J.